The primary structure comprises 113 residues: Large ribosomal subunit protein uL22 (113 aa).

Belongs to the universal ribosomal protein uL22 family. As to quaternary structure, part of the 50S ribosomal subunit.

This protein binds specifically to 23S rRNA; its binding is stimulated by other ribosomal proteins, e.g. L4, L17, and L20. It is important during the early stages of 50S assembly. It makes multiple contacts with different domains of the 23S rRNA in the assembled 50S subunit and ribosome. In terms of biological role, the globular domain of the protein is located near the polypeptide exit tunnel on the outside of the subunit, while an extended beta-hairpin is found that lines the wall of the exit tunnel in the center of the 70S ribosome. The chain is Large ribosomal subunit protein uL22 from Opitutus terrae (strain DSM 11246 / JCM 15787 / PB90-1).